The chain runs to 477 residues: Delayed-rectifier potassium channel regulatory subunit KCNS2 (477 aa).

Residues 1-184 (MTRQSLWDVS…LALDNPGYSV (184 aa)) lie on the Cytoplasmic side of the membrane. The helical transmembrane segment at 185-206 (LSRVFSVLSILVVLGSIITMCL) threads the bilayer. Topologically, residues 207–225 (NSLPDFQIPDSQGNPGEDP) are extracellular. The helical transmembrane segment at 226-248 (RFEIVEHFGIAWFTFELVARFAV) threads the bilayer. The Cytoplasmic segment spans residues 249–259 (APDFLKFFKNA). The chain crosses the membrane as a helical span at residues 260 to 280 (LNLIDLMSIVPFYITLVVNLV). At 281–290 (VESSPTLANL) the chain is on the extracellular side. Residues 291 to 311 (GRVAQVLRLMRIFRILKLARH) form a helical; Voltage-sensor membrane-spanning segment. The Cytoplasmic segment spans residues 312–326 (STGLRSLGATLKYSY). The chain crosses the membrane as a helical span at residues 327 to 348 (KEVGLLLLYLSVGISIFSVVAY). Over 349–361 (TIEKEENEGLATI) the chain is Extracellular. The helical intramembrane region spans 362 to 373 (PACWWWATVSMT). The short motif at 374–379 (TVGYGD) is the Selectivity filter element. Residues 374–381 (TVGYGDVV) lie within the membrane without spanning it. Topologically, residues 382-388 (PGTTAGK) are extracellular. A helical transmembrane segment spans residues 389 to 417 (LTASACILAGILVVVLPITLIFNKFSHFY). Residues 418–477 (RRQKQLESAMRSCDFGDGMKEVPSVNLRDYYAHKVKSLMASLTNMSRSSPSELSLDDSLH) lie on the Cytoplasmic side of the membrane.

It belongs to the potassium channel family. S (TC 1.A.1.2) subfamily. Kv9.2/KCNS2 sub-subfamily. In terms of assembly, heterotetramer with KCNB1 and KCNB2. Does not form homomultimers. Detected in brain, but not in the other tissues tested. Expression was highest in the olfactory bulb, cerebral cortex, hippocampus, habenula, basolateral amygdaloid nuclei and cerebellum.

It is found in the cell membrane. In terms of biological role, potassium channel regulatory subunit that modulate the delayed rectifier voltage-gated potassium channel activity of KCNB1 and KCNB2 by altering their kinetics, expression levels, and shifting the half-inactivation potential to more polarized values. While it does not form functional channels on its own, it can form functional heterotetrameric channels with KCNB1 and KCNB2. Each regulatory subunit has unique regulatory properties that can lead to extensive inhibition, significant changes in kinetics, and/or substantial shifts in the voltage dependencies of the inactivation process. This Mus musculus (Mouse) protein is Delayed-rectifier potassium channel regulatory subunit KCNS2.